A 171-amino-acid polypeptide reads, in one-letter code: Allophycocyanin subunit beta-18 (171 aa).

At Asn-72 the chain carries N4-methylasparagine. Cys-82 contacts (2R,3E)-phycocyanobilin.

Belongs to the phycobiliprotein family. As to quaternary structure, heterodimer of an alpha and a beta chain. Post-translationally, contains one covalently linked bilin chromophore.

The protein localises to the plastid. It localises to the chloroplast thylakoid membrane. Functionally, light-harvesting photosynthetic bile pigment-protein from the phycobiliprotein complex. Allophycocyanin has a maximum absorption at approximately 650 nanometers. The chain is Allophycocyanin subunit beta-18 (apcF) from Aglaothamnion neglectum (Red alga).